A 288-amino-acid chain; its full sequence is ATP synthase gamma chain (288 aa).

It belongs to the ATPase gamma chain family. F-type ATPases have 2 components, CF(1) - the catalytic core - and CF(0) - the membrane proton channel. CF(1) has five subunits: alpha(3), beta(3), gamma(1), delta(1), epsilon(1). CF(0) has three main subunits: a, b and c.

It localises to the cell membrane. Produces ATP from ADP in the presence of a proton gradient across the membrane. The gamma chain is believed to be important in regulating ATPase activity and the flow of protons through the CF(0) complex. This Staphylococcus haemolyticus (strain JCSC1435) protein is ATP synthase gamma chain.